We begin with the raw amino-acid sequence, 406 residues long: Plasma serine protease inhibitor (406 aa).

An N-terminal signal peptide occupies residues methionine 1–leucine 19. Residues histidine 20–arginine 25 constitute a propeptide, removed in mature form. Threonine 39 carries an O-linked (GalNAc...) threonine glycan. N-linked (GlcNAc...) asparagine glycans are attached at residues asparagine 249, asparagine 262, and asparagine 338.

It belongs to the serpin family. As to quaternary structure, forms protease inhibiting heterodimers in extracellular body fluids with serine proteases such as activated protein C/coagulation factor V/F5, acrosin/ACR, chymotrypsinogen B/CTRB1, prothrombin/F2, factor Xa/F10, factor XI/F11, kallikrein/KLKB1, tissue kallikrein, trypsin/PRSS1, prostate specific antigen/KLK3, tissue plasminogen activator/PLAT and urinary plasminogen activator/PLAU. Forms membrane-anchored serine proteases inhibiting heterodimers with TMPRSS7 and TMPRSS11E. Interacts with SEMG2. N- and O-glycosylated. N-glycosylation consists of a mixture of sialylated bi- (including sialyl-Lewis X epitopes), tri- and tetra-antennary complex-type chains; affects the maximal heparin- and thrombomodulin-enhanced rates of thrombin inhibition. O-glycosylated with core 1 or possibly core 8 glycans. Further modified with 2 sialic acid residues. Post-translationally, proteolytically cleaved. Inhibition of proteases is accompanied by formation of a stable enzyme-inhibitor complex and by degradation of the serpin to lower molecular weight derivatives. Proteolytically cleaved at the N-terminus; inhibits slightly the heparin- and thrombomodulin-enhanced rates of thrombin inhibition. As to expression, predominantly expressed in the epithelium of seminal vesicles. Expressed in the proximal tubular epithelium of the kidney. Expressed in the superficial and more differentiated epidermal keratinocytes of the skin. Expressed in megakaryocytes and platelets. Expressed poorly in kidney tumor cells compared to non tumor kidney tissues. Expressed in spermatozoa. Present in very high concentration in seminal plasma. Present in high concentration in plasma, synovial and Graaf follicle fluids. Present in low concentration in breast milk and in amniotic fluids. Present in very low concentration in urine, cerebrospinal fluids, saliva and tears (at protein level). Strongly expressed in liver. Expressed in kidney, spleen, pancreas, skeletal muscle, heart, testes, ovary, interstitial Leydig cells, epididymal glands, seminal vesicles and prostate.

The protein localises to the secreted. It is found in the extracellular space. With respect to regulation, its inhibitory activity is greatly enhanced in the presence of glycosaminoglycans, heparin, thrombomodulin and phospholipids vesicles. Its function is as follows. Heparin-dependent serine protease inhibitor acting in body fluids and secretions. Inactivates serine proteases by binding irreversibly to their serine activation site. Involved in the regulation of intravascular and extravascular proteolytic activities. Plays hemostatic roles in the blood plasma. Acts as a procoagulant and pro-inflammatory factor by inhibiting the anticoagulant activated protein C factor as well as the generation of activated protein C factor by the thrombin/thrombomodulin complex. Acts as an anticoagulant factor by inhibiting blood coagulation factors like prothrombin, factor XI, factor Xa, plasma kallikrein and fibrinolytic enzymes such as tissue- and urinary-type plasminogen activators. In seminal plasma, inactivates several serine proteases implicated in the reproductive system. Inhibits the serpin acrosin; indirectly protects component of the male genital tract from being degraded by excessive released acrosin. Inhibits tissue- and urinary-type plasminogen activator, prostate-specific antigen and kallikrein activities; has a control on the sperm motility and fertilization. Inhibits the activated protein C-catalyzed degradation of SEMG1 and SEMG2; regulates the degradation of semenogelin during the process of transfer of spermatozoa from the male reproductive tract into the female tract. In urine, inhibits urinary-type plasminogen activator and kallikrein activities. Inactivates membrane-anchored serine proteases activities such as MPRSS7 and TMPRSS11E. Inhibits urinary-type plasminogen activator-dependent tumor cell invasion and metastasis. May also play a non-inhibitory role in seminal plasma and urine as a hydrophobic hormone carrier by its binding to retinoic acid. The chain is Plasma serine protease inhibitor (SERPINA5) from Homo sapiens (Human).